We begin with the raw amino-acid sequence, 1313 residues long: Inactive protein tyrosine kinase pTKL (1313 aa).

MORN repeat units follow at residues tyrosine 20–asparagine 42 and phenylalanine 45–asparagine 63. 7 N-linked (GlcNAc...) asparagine glycosylation sites follow: asparagine 63, asparagine 131, asparagine 178, asparagine 208, asparagine 254, asparagine 260, and asparagine 288. The SAM domain maps to tryptophan 300–threonine 365. Asparagine 466, asparagine 516, asparagine 525, asparagine 528, and asparagine 534 each carry an N-linked (GlcNAc...) asparagine glycan. Basic and acidic residues predominate over residues glutamate 569–asparagine 580. The tract at residues glutamate 569 to glutamate 631 is disordered. Over residues proline 586 to lysine 604 the composition is skewed to polar residues. Asparagine 592, asparagine 598, asparagine 661, asparagine 678, asparagine 729, asparagine 735, and asparagine 749 each carry an N-linked (GlcNAc...) asparagine glycan. Lysine 782 contacts ATP. N-linked (GlcNAc...) asparagine glycans are attached at residues asparagine 790, asparagine 868, asparagine 940, asparagine 983, and asparagine 1000. The region spanning phenylalanine 962–methionine 1294 is the Protein kinase domain. The short motif at lysine 1052 to phenylalanine 1055 is the RVxF motif element. N-linked (GlcNAc...) asparagine glycans are attached at residues asparagine 1191 and asparagine 1198.

The protein belongs to the protein kinase superfamily. TKL Ser/Thr protein kinase family.

The protein resides in the parasitophorous vacuole. The protein localises to the host cell membrane. It localises to the host cytoplasm. Its subcellular location is the host cytoskeleton. The polypeptide is Inactive protein tyrosine kinase pTKL (Plasmodium berghei (strain Anka)).